The primary structure comprises 292 residues: Shikimate dehydrogenase (NADP(+)) (292 aa).

Shikimate-binding positions include 25–27 and T72; that span reads SKS. Residue K76 is the Proton acceptor of the active site. Residues N97 and D113 each contribute to the shikimate site. NADP(+) is bound by residues 137–141, 161–166, and M230; these read GAGGA and NRTQSK. Y232 is a binding site for shikimate. Position 254 (G254) interacts with NADP(+).

The protein belongs to the shikimate dehydrogenase family. Homodimer.

The enzyme catalyses shikimate + NADP(+) = 3-dehydroshikimate + NADPH + H(+). The protein operates within metabolic intermediate biosynthesis; chorismate biosynthesis; chorismate from D-erythrose 4-phosphate and phosphoenolpyruvate: step 4/7. Involved in the biosynthesis of the chorismate, which leads to the biosynthesis of aromatic amino acids. Catalyzes the reversible NADPH linked reduction of 3-dehydroshikimate (DHSA) to yield shikimate (SA). This chain is Shikimate dehydrogenase (NADP(+)), found in Shewanella sp. (strain MR-7).